A 291-amino-acid polypeptide reads, in one-letter code: Small ribosomal subunit protein uS2 (291 aa).

Residues 235-291 are disordered; that stretch reads NLQEDEESGDSGVDPYQDREEEITDYSNYTPKDEASGDDEDEEDNSLVNDEDLYDDK. The segment covering 270–291 has biased composition (acidic residues); the sequence is SGDDEDEEDNSLVNDEDLYDDK.

This sequence belongs to the universal ribosomal protein uS2 family.

In Treponema denticola (strain ATCC 35405 / DSM 14222 / CIP 103919 / JCM 8153 / KCTC 15104), this protein is Small ribosomal subunit protein uS2.